Reading from the N-terminus, the 243-residue chain is Carboxy-S-adenosyl-L-methionine synthase (243 aa).

Residues tyrosine 40, 65 to 67 (GCS), 90 to 91 (DN), 118 to 119 (DI), asparagine 133, and arginine 200 each bind S-adenosyl-L-methionine.

It belongs to the class I-like SAM-binding methyltransferase superfamily. Cx-SAM synthase family. Homodimer.

The catalysed reaction is prephenate + S-adenosyl-L-methionine = carboxy-S-adenosyl-L-methionine + 3-phenylpyruvate + H2O. Catalyzes the conversion of S-adenosyl-L-methionine (SAM) to carboxy-S-adenosyl-L-methionine (Cx-SAM). The protein is Carboxy-S-adenosyl-L-methionine synthase of Shewanella woodyi (strain ATCC 51908 / MS32).